The chain runs to 330 residues: Peroxidase 42 (330 aa).

The signal sequence occupies residues M1–A23. Disulfide bonds link C40/C119, C73/C78, C125/C323, and C204/C231. Catalysis depends on H71, which acts as the Proton acceptor. D72, V75, D79, and S81 together coordinate Ca(2+). Substrate is bound at residue P167. Residue N170 is glycosylated (N-linked (GlcNAc...) asparagine). Heme b is bound at residue H197. Residue S198 participates in Ca(2+) binding. Residues D247, T250, and D255 each coordinate Ca(2+).

It belongs to the peroxidase family. Classical plant (class III) peroxidase subfamily. Requires heme b as cofactor. The cofactor is Ca(2+). As to expression, constitutively expressed in the whole plant, with the highest expression in roots.

The protein resides in the secreted. The enzyme catalyses 2 a phenolic donor + H2O2 = 2 a phenolic radical donor + 2 H2O. Removal of H(2)O(2), oxidation of toxic reductants, biosynthesis and degradation of lignin, suberization, auxin catabolism, response to environmental stresses such as wounding, pathogen attack and oxidative stress. These functions might be dependent on each isozyme/isoform in each plant tissue. Its function is as follows. Might function as heat shock-like defense protein. The sequence is that of Peroxidase 42 (PER42) from Arabidopsis thaliana (Mouse-ear cress).